The sequence spans 538 residues: Poly [ADP-ribose] polymerase 2 (538 aa).

A WGR domain is found at 1-94 (MSIINDENGR…RDDEPVPNKY (94 aa)). The disordered stretch occupies residues 104 to 133 (RQTEKEVKKEEPEPEPKVDEKNTRGRKKRG). Residues 105–126 (QTEKEVKKEEPEPEPKVDEKNT) are compositionally biased toward basic and acidic residues. Positions 148 to 285 (VEEVNEKLKE…GSIEASLELK (138 aa)) constitute a PARP alpha-helical domain. The PARP catalytic domain maps to 309–535 (EPVSEEIAGK…VKVDRLTAKE (227 aa)). The disordered stretch occupies residues 357–381 (QEVPKKRGRKSTKTAAPTVPPPTTK).

It belongs to the ARTD/PARP family.

Its subcellular location is the nucleus. It catalyses the reaction NAD(+) + (ADP-D-ribosyl)n-acceptor = nicotinamide + (ADP-D-ribosyl)n+1-acceptor + H(+).. It carries out the reaction L-aspartyl-[protein] + NAD(+) = 4-O-(ADP-D-ribosyl)-L-aspartyl-[protein] + nicotinamide. The catalysed reaction is L-glutamyl-[protein] + NAD(+) = 5-O-(ADP-D-ribosyl)-L-glutamyl-[protein] + nicotinamide. Inhibited by N-(6-oxo-5,6-dihydrophenanthridin-2-yl)-N,N-dimethylacetamide HCl (PJ34), 1,5-dihydroxyisoquinoline (DHQ) and 3-aminobenzamide (3AB). Functionally, poly[ADP-ribose] polymerase modifies various nuclear proteins by poly(ADP-ribosyl)ation, a post-translational modification synthesized after DNA damage that appears as an obligatory step in a detection/signaling pathway leading to the reparation of DNA strand breaks and programmed cell death. The polypeptide is Poly [ADP-ribose] polymerase 2 (Caenorhabditis elegans).